The chain runs to 276 residues: 3-keto-5-aminohexanoate cleavage enzyme (276 aa).

Glu-14 contributes to the (5S)-5-amino-3-oxohexanoate binding site. Zn(2+)-binding residues include His-46 and His-48. Positions 82, 85, 106, and 108 each coordinate (5S)-5-amino-3-oxohexanoate. Glu-230 is a binding site for Zn(2+).

This sequence belongs to the BKACE family. Kce subfamily. Homotetramer. Requires Zn(2+) as cofactor.

It catalyses the reaction (5S)-5-amino-3-oxohexanoate + acetyl-CoA = (3S)-3-aminobutanoyl-CoA + acetoacetate. It functions in the pathway amino-acid degradation; L-lysine degradation via acetate pathway. In terms of biological role, involved in the anaerobic fermentation of lysine. Catalyzes the reversible reaction between 3-keto-5-aminohexanoate (KAH) and acetyl-CoA to form 3-aminobutyryl-CoA and acetoacetate. The reaction involves the deprotonation of KAH, the nucleophilic addition onto acetyl-CoA and the intramolecular transfer of the CoA moiety. The polypeptide is 3-keto-5-aminohexanoate cleavage enzyme (Cloacimonas acidaminovorans (strain Evry)).